The primary structure comprises 257 residues: Leucine-rich repeat-containing protein 3 (257 aa).

A signal peptide spans 1–32; it reads MGPRGRQSPSSPLAPSQGSCFFILFCLRLGAS. Residues 33 to 64 form the LRRNT domain; that stretch reads CPQSCQCPDHAGAVAVHCSSRGLQEIPRDIPA. LRR repeat units follow at residues 65–86, 89–110, and 114–135; these read NTVL…AFQH, QLRE…AFSG, and GLRL…ALGK. Residues 145–198 form the LRRCT domain; that stretch reads NPLHCECALQEALWELKLDPDSVDEIACHTSAQEQFVGKPLIQVLDSGASFCST. The helical transmembrane segment at 205–225 threads the bilayer; it reads VAMLVTMFGWFTMVIAYVVYY.

Belongs to the LRRC3 family.

The protein localises to the membrane. The protein is Leucine-rich repeat-containing protein 3 (Lrrc3) of Rattus norvegicus (Rat).